The following is a 70-amino-acid chain: Large ribosomal subunit protein bL31 (70 aa).

Residues Cys16, Cys18, Cys37, and Cys40 each contribute to the Zn(2+) site.

Belongs to the bacterial ribosomal protein bL31 family. Type A subfamily. As to quaternary structure, part of the 50S ribosomal subunit. Zn(2+) serves as cofactor.

Binds the 23S rRNA. The protein is Large ribosomal subunit protein bL31 of Psychromonas ingrahamii (strain DSM 17664 / CCUG 51855 / 37).